Consider the following 508-residue polypeptide: U4/U6 small nuclear ribonucleoprotein Prp31 (508 aa).

A disordered region spans residues 1–45 (MSLADELLADLEEAGEEDGLYPGGEEGESDGEPGERQVDGGLEDI). Over residues 7-32 (LLADLEEAGEEDGLYPGGEEGESDGE) the composition is skewed to acidic residues. Coiled-coil stretches lie at residues 96 to 131 (EADP…KYSK) and 192 to 226 (DDEL…MSFI). One can recognise a Nop domain in the interval 226-344 (IAPNLSIIVG…IERKFDKWQE (119 aa)). Disordered regions lie at residues 345 to 368 (PPPV…RGGR) and 442 to 461 (QSMT…GTSS). A Nuclear localization signal (NLS) motif is present at residues 362-375 (RKKRGGRRYRKMKE).

Belongs to the PRP31 family. In terms of assembly, identified in the spliceosome B complex. Component of the U4/U6-U5 tri-snRNP complex. Component of some MLL1/MLL complex.

The protein localises to the nucleus. The protein resides in the nucleus speckle. It is found in the cajal body. Involved in pre-mRNA splicing as component of the spliceosome. Required for the assembly of the U4/U5/U6 tri-snRNP complex, one of the building blocks of the spliceosome. The polypeptide is U4/U6 small nuclear ribonucleoprotein Prp31 (prpf31) (Danio rerio (Zebrafish)).